Here is a 625-residue protein sequence, read N- to C-terminus: Alpha-amylase 1 (625 aa).

Positions 1 to 22 (MGFSKIALFSLFALFGLPTSLA) are cleaved as a signal peptide. An intrachain disulfide couples Cys51 to Cys59. Trp105 provides a ligand contact to substrate. Asn143 provides a ligand contact to Ca(2+). Asn153, Asn163, and Asn180 each carry an N-linked (GlcNAc...) asparagine glycan. Cys172 and Cys187 form a disulfide bridge. Residues Glu185 and Asp198 each coordinate Ca(2+). Arg227 contacts substrate. Asp229 lines the Ca(2+) pocket. Asp229 acts as the Nucleophile in catalysis. Residue 232–233 (KQ) coordinates substrate. An N-linked (GlcNAc...) asparagine glycan is attached at Asn241. Glu253 contacts Ca(2+). Glu253 (proton donor) is an active-site residue. N-linked (GlcNAc...) asparagine glycans are attached at residues Asn260 and Asn286. A disulfide bridge connects residues Cys263 and Cys306. Asp322 contacts substrate. N-linked (GlcNAc...) asparagine glycosylation is present at Asn331. Substrate is bound at residue Arg370. N-linked (GlcNAc...) asparagine glycosylation is found at Asn440 and Asn461. A disordered region spans residues 526–579 (SATSSSKSSSSSSSRSGSSSSSSSRSGSTSSSGSSHTITSTSQSVHTSGSSTST). A lipid anchor (GPI-anchor amidated serine) is attached at Ser603. The propeptide at 604-625 (SANAVRVSILGVAAFIAIVLFI) is removed in mature form.

Belongs to the glycosyl hydrolase 13 family. Ca(2+) serves as cofactor.

The protein localises to the cell membrane. The catalysed reaction is Endohydrolysis of (1-&gt;4)-alpha-D-glucosidic linkages in polysaccharides containing three or more (1-&gt;4)-alpha-linked D-glucose units.. This is Alpha-amylase 1 (aah1) from Schizosaccharomyces pombe (strain 972 / ATCC 24843) (Fission yeast).